The sequence spans 216 residues: Ribosomal RNA small subunit methyltransferase G (216 aa).

S-adenosyl-L-methionine is bound by residues Gly-75, Leu-80, and Arg-141.

This sequence belongs to the methyltransferase superfamily. RNA methyltransferase RsmG family.

It is found in the cytoplasm. It catalyses the reaction guanosine(527) in 16S rRNA + S-adenosyl-L-methionine = N(7)-methylguanosine(527) in 16S rRNA + S-adenosyl-L-homocysteine. In terms of biological role, specifically methylates the N7 position of guanine in position 527 of 16S rRNA. This chain is Ribosomal RNA small subunit methyltransferase G, found in Nitrosospira multiformis (strain ATCC 25196 / NCIMB 11849 / C 71).